A 521-amino-acid chain; its full sequence is Ribonuclease Y (521 aa).

Residues 10–30 (LIITAGVSIALAIVAFFLGYL) traverse the membrane as a helical segment. The 61-residue stretch at 210–270 (TVSVVTLPND…IRREIAKLTL (61 aa)) folds into the KH domain. Positions 336 to 430 (VLAHSIEVAN…IQAADSVSAA (95 aa)) constitute an HD domain.

It belongs to the RNase Y family.

The protein resides in the cell membrane. In terms of biological role, endoribonuclease that initiates mRNA decay. The polypeptide is Ribonuclease Y (Caldicellulosiruptor saccharolyticus (strain ATCC 43494 / DSM 8903 / Tp8T 6331)).